The sequence spans 922 residues: Centrosomal protein of 104 kDa (922 aa).

The stretch at 210–277 forms a coiled coil; sequence EVAQIIRRLD…DLAKEKKQQM (68 aa). A compositionally biased stretch (low complexity) spans 307-318; that stretch reads PLQPLASPSSPQ. 2 disordered regions span residues 307–333 and 348–419; these read PLQP…EELA and LASS…PLTE. The span at 396 to 407 shows a compositional bias: basic and acidic residues; that stretch reads PEVREADSDVRR. HEAT repeat units follow at residues 526 to 564 and 601 to 637; these read AIPL…LQLI and GFTV…YRQH. Basic and acidic residues-rich tracts occupy residues 673–697 and 714–725; these read TEAE…EETK and QEKENEAVKLKN. 2 disordered regions span residues 673-741 and 880-922; these read TEAE…TPEI and PAPQ…HTRR. The stretch at 678-705 forms a coiled coil; the sequence is KTQKRVVTKEAEKQKKEETKALQGLSAA.

In terms of assembly, interacts with CCP110 and CEP97. Interacts with ARMC9, TOGARAM1, CCDC66 and CSPP1. Expressed predominantly in the brain. Also detected, although at much lower levels, in the heart and the liver. Within the brain, expressed in the cerebral cortex, hippocampus, cerebellum and brainstem.

The protein resides in the cell projection. It is found in the cilium. Its subcellular location is the cytoplasm. It localises to the cytoskeleton. The protein localises to the microtubule organizing center. The protein resides in the centrosome. It is found in the centriole. Its subcellular location is the spindle pole. Its function is as follows. Required for ciliogenesis and for structural integrity at the ciliary tip. This is Centrosomal protein of 104 kDa (Cep104) from Rattus norvegicus (Rat).